The primary structure comprises 361 residues: Peptide chain release factor 1 (361 aa).

Position 236 is an N5-methylglutamine (Gln-236).

It belongs to the prokaryotic/mitochondrial release factor family. Methylated by PrmC. Methylation increases the termination efficiency of RF1.

It localises to the cytoplasm. Its function is as follows. Peptide chain release factor 1 directs the termination of translation in response to the peptide chain termination codons UAG and UAA. The chain is Peptide chain release factor 1 from Levilactobacillus brevis (strain ATCC 367 / BCRC 12310 / CIP 105137 / JCM 1170 / LMG 11437 / NCIMB 947 / NCTC 947) (Lactobacillus brevis).